The primary structure comprises 71 residues: uncharacterized protein (71 aa).

This is an uncharacterized protein from Autographa californica nuclear polyhedrosis virus (AcMNPV).